A 429-amino-acid chain; its full sequence is Chaperone SurA (429 aa).

A signal peptide spans 1–18 (MFKRIALVCALFSGICFA). PpiC domains are found at residues 170-271 (NLTY…KLVA) and 281-380 (ITQT…EVIA).

The protein resides in the periplasm. It carries out the reaction [protein]-peptidylproline (omega=180) = [protein]-peptidylproline (omega=0). Chaperone involved in the correct folding and assembly of outer membrane proteins. Recognizes specific patterns of aromatic residues and the orientation of their side chains, which are found more frequently in integral outer membrane proteins. May act in both early periplasmic and late outer membrane-associated steps of protein maturation. The polypeptide is Chaperone SurA (Legionella pneumophila (strain Paris)).